The sequence spans 227 residues: Isopentenyl-diphosphate delta-isomerase 2 (227 aa).

K36 lines the substrate pocket. Positions 40 and 51 each coordinate Mg(2+). Residues L49 to T199 form the Nudix hydrolase domain. 2 residues coordinate substrate: R70 and K74. The active site involves S86. Residue S87 participates in substrate binding. Residues E146 and E148 each coordinate Mg(2+). E148 is an active-site residue. A Microbody targeting signal motif is present at residues H225–V227.

It belongs to the IPP isomerase type 1 family. The cofactor is Mg(2+). In terms of tissue distribution, muscle-specific expression.

It is found in the peroxisome. The enzyme catalyses isopentenyl diphosphate = dimethylallyl diphosphate. It participates in isoprenoid biosynthesis; dimethylallyl diphosphate biosynthesis; dimethylallyl diphosphate from isopentenyl diphosphate: step 1/1. Its function is as follows. Catalyzes the 1,3-allylic rearrangement of the homoallylic substrate isopentenyl (IPP) to its highly electrophilic allylic isomer, dimethylallyl diphosphate (DMAPP). This is Isopentenyl-diphosphate delta-isomerase 2 (IDI2) from Homo sapiens (Human).